A 420-amino-acid polypeptide reads, in one-letter code: MLERPSFPRLGAGTRHHRPLGQTGEGSDWLLAFTGISGIAGMMIPYVPWGLIRAMQRGSIELTSPRGVWIFNCAILPSRLHRTVERKGNMKPDQDLFGKVYLADCLCDRRLRWLRKSDFQHTCCAWCQCHNIRTTAGPSSRCPERDRGELCGCGPARDRCRGGGYGRCLCGVGRIQIPTPNRGFPVLLRGGKPCRERVFHRSSSHAAGFLHEEQLLFHCVCGQGHVGYLGRGRQEISRHRRVDQRHHWTQTPKDCFRQQRGGVLGATRERCLYARQKRSPSPGRHPALGSPPAQLRQDHLHNPHRLSSRLHLAWVRPRTRHQTGPHEADPGHQRRHFRAAGGEIPVLGESGPGDRCAGRPRGFYYLRGFIGCESFVYEHGWVEPQERTWNCGFVVERGDGVVCGAGVEEEVGEDVQGRCY.

The interval 1-21 is disordered; that stretch reads MLERPSFPRLGAGTRHHRPLG. Residues 29 to 49 form a helical membrane-spanning segment; it reads WLLAFTGISGIAGMMIPYVPW. Positions 275 to 298 are disordered; that stretch reads RQKRSPSPGRHPALGSPPAQLRQD.

The protein resides in the membrane. It catalyses the reaction 3-oxopresphingofungin + NADPH + 2 H(+) = presphingofungin + NADP(+). The protein operates within secondary metabolite biosynthesis. Its function is as follows. Ketoreductase; part of the gene cluster that mediates the biosynthesis of sphingofungins, bioactive molecules acting as sphingolipid inhibitors via inhibiting serine palmitoyl transferase (SPT). Within the pathway, sphF catalyzes the reduction of the C-3 ketone of 3-keto-presphingofungin to produce presphingofungin. Sphingofungin biosynthesis starts with the PKS sphB that produces an C18 polyketide precursor 3-hydroxyoctadeca-4,10-dienoyl-ACP containing one delta-6 desaturation and one delta-12 desaturation. The aminoacyl transferase sphA uses the sphB product to produce 3-keto-presphingofungin by adding an aminomalonate molecule. SphF then reduces the C-3 ketone of 3-keto-presphingofungin which leads to presphingofungin. The cytochrome P450 monooxygenase sphH converts presphingofungin into sphingofungin B1 which is further converted to sphingofungin B by the dioxygenase sphC. SphC is also able to convert presphingofungin into sphingofungin B2. The acetyltransferase sphE acetylates sphingofungin B to produce sphingofungin C, but can also convert sphingofungin B1 into sphingofungin C1 and sphingofungin B2 into sphingofungin C2. Finally, sphingofungin C can be spontaneously converted into sphingofungin D. In Aspergillus fumigatus (strain CBS 144.89 / FGSC A1163 / CEA10) (Neosartorya fumigata), this protein is Ketoreductase sphF.